A 397-amino-acid polypeptide reads, in one-letter code: Elongation factor Tu (397 aa).

The tr-type G domain maps to 10–206 (KPHVNIGTIG…AVDESIPEPQ (197 aa)). Residues 19 to 26 (GHIDHGKT) are G1. GTP is bound at residue 19 to 26 (GHIDHGKT). Mg(2+) is bound at residue Thr26. The G2 stretch occupies residues 62–66 (GITIS). The G3 stretch occupies residues 83-86 (DCPG). GTP-binding positions include 83 to 87 (DCPGH) and 138 to 141 (NKAD). The tract at residues 138–141 (NKAD) is G4. Residues 176 to 178 (SAL) form a G5 region.

Belongs to the TRAFAC class translation factor GTPase superfamily. Classic translation factor GTPase family. EF-Tu/EF-1A subfamily. Monomer.

It is found in the cytoplasm. The catalysed reaction is GTP + H2O = GDP + phosphate + H(+). GTP hydrolase that promotes the GTP-dependent binding of aminoacyl-tRNA to the A-site of ribosomes during protein biosynthesis. The protein is Elongation factor Tu of Frankia casuarinae (strain DSM 45818 / CECT 9043 / HFP020203 / CcI3).